Consider the following 424-residue polypeptide: NADH-quinone oxidoreductase subunit H (424 aa).

The next 9 helical transmembrane spans lie at 11–31 (LVVAKAIAIFVFLMLTVLVAI), 79–99 (FVYFVAPIISVIPAFTAFAFI), 119–139 (LPVAVLFILGLSAIGVYGIVL), 160–180 (VISYEVAMGLSFAAVFLYAGS), 193–213 (VWYIFLLLPSFVIYLISMVGE), 255–275 (VSALAATLFLGGWHAPWPLNL), 283–303 (WWPVLWFTAKVWGFLFMYFWL), 317–337 (ALGWKLLIPVSLVWVLIAAVI), and 347–367 (YWTPALVVSSIVVAAILVMSL). The segment at 376–424 (AVTKARRRGKQPAAGPDEQGALEPLFPTPPLPMKPLAQPVGASKENARG) is disordered.

The protein belongs to the complex I subunit 1 family. In terms of assembly, NDH-1 is composed of 14 different subunits. Subunits NuoA, H, J, K, L, M, N constitute the membrane sector of the complex.

It is found in the cell membrane. The catalysed reaction is a quinone + NADH + 5 H(+)(in) = a quinol + NAD(+) + 4 H(+)(out). Functionally, NDH-1 shuttles electrons from NADH, via FMN and iron-sulfur (Fe-S) centers, to quinones in the respiratory chain. The immediate electron acceptor for the enzyme in this species is believed to be menaquinone. Couples the redox reaction to proton translocation (for every two electrons transferred, four hydrogen ions are translocated across the cytoplasmic membrane), and thus conserves the redox energy in a proton gradient. This subunit may bind ubiquinone. In Mycobacterium ulcerans (strain Agy99), this protein is NADH-quinone oxidoreductase subunit H.